An 84-amino-acid chain; its full sequence is Sec-independent protein translocase protein TatA (84 aa).

The chain crosses the membrane as a helical span at residues 1–21 (MGGISIWQLLIVAVIVVLLFG). 2 stretches are compositionally biased toward basic and acidic residues: residues 42–55 (AMSDDDAKQDKTSQ) and 64–84 (IADKQGEAKKEDAKSQDKEQV). Residues 42–84 (AMSDDDAKQDKTSQDADFTAKSIADKQGEAKKEDAKSQDKEQV) form a disordered region.

The protein belongs to the TatA/E family. In terms of assembly, the Tat system comprises two distinct complexes: a TatABC complex, containing multiple copies of TatA, TatB and TatC subunits, and a separate TatA complex, containing only TatA subunits. Substrates initially bind to the TatABC complex, which probably triggers association of the separate TatA complex to form the active translocon.

It is found in the cell inner membrane. Part of the twin-arginine translocation (Tat) system that transports large folded proteins containing a characteristic twin-arginine motif in their signal peptide across membranes. TatA could form the protein-conducting channel of the Tat system. In Salmonella typhi, this protein is Sec-independent protein translocase protein TatA.